Here is a 21-residue protein sequence, read N- to C-terminus: thr operon leader peptide (21 aa).

Belongs to the thr operon leader peptide family.

This protein is involved in control of the biosynthesis of threonine. The polypeptide is thr operon leader peptide (Shigella boydii serotype 18 (strain CDC 3083-94 / BS512)).